The sequence spans 404 residues: MDYSEIMVRHGELSTKGKNRMRFINKLKNNIQDVLAPFPAITVRSDRDRTHVSLNGTDYQPIVEALKLVFGVQALSPVYKLEKSVPLLVTAVQDIMTSLYRDGLTFKIATKRSDHAFELDSRELNSLLGGAVFEVLPNIQAQMKHPDVTLKVEIRDEAAYISYEEIKGAGGLPVGTSGKGMLMLSGGIDSPVAGYLALKRGLDIEVVHFASPPYTSPGALAKAQDLTRRLTRFGGNIQFIEVPFTEIQEEIKNKAPEAYLMTLTRRFMMRITDAIREQRKGLVIVNGESLGQVASQTLESMQAINAVTSTPIIRPVVTMDKLEIIEMAQAIDTFDISIQPFEDCCTIFAPDRPKTNPKLGNAEKYEERFDIDGLVQRAVSGIIVTEITPEIVNDEVENLIDALL.

The region spanning 60-165 (QPIVEALKLV…DEAAYISYEE (106 aa)) is the THUMP domain. ATP-binding positions include 183-184 (ML), 208-209 (HF), arginine 265, glycine 287, and glutamine 296.

It belongs to the ThiI family.

The protein localises to the cytoplasm. It catalyses the reaction [ThiI sulfur-carrier protein]-S-sulfanyl-L-cysteine + a uridine in tRNA + 2 reduced [2Fe-2S]-[ferredoxin] + ATP + H(+) = [ThiI sulfur-carrier protein]-L-cysteine + a 4-thiouridine in tRNA + 2 oxidized [2Fe-2S]-[ferredoxin] + AMP + diphosphate. The enzyme catalyses [ThiS sulfur-carrier protein]-C-terminal Gly-Gly-AMP + S-sulfanyl-L-cysteinyl-[cysteine desulfurase] + AH2 = [ThiS sulfur-carrier protein]-C-terminal-Gly-aminoethanethioate + L-cysteinyl-[cysteine desulfurase] + A + AMP + 2 H(+). It functions in the pathway cofactor biosynthesis; thiamine diphosphate biosynthesis. Its function is as follows. Catalyzes the ATP-dependent transfer of a sulfur to tRNA to produce 4-thiouridine in position 8 of tRNAs, which functions as a near-UV photosensor. Also catalyzes the transfer of sulfur to the sulfur carrier protein ThiS, forming ThiS-thiocarboxylate. This is a step in the synthesis of thiazole, in the thiamine biosynthesis pathway. The sulfur is donated as persulfide by IscS. This Streptococcus pyogenes serotype M2 (strain MGAS10270) protein is Probable tRNA sulfurtransferase.